We begin with the raw amino-acid sequence, 482 residues long: MDRVSNLPDGVRGHILSFLPAKHIALTSVLSKSWLNLWKLIPILDIDDSEFLHPEEGKAERLEIRQSFVDFVDRVLALQDDSPIDRFSLKCITGIHPDHVNRWICNVLQRGVSDLDLFIDFSYEDTQEDEDMLPQEMFVSKTLVKLKIRNDRCVDWWCGKGGTSLPMLKSLYIDSDLILWGKMKRFLSSFPVLEELRMASMEWKESHETVSSASLRKLSILGTGCEDYVNPKSISFDTPSLLYLNYSDLVAEDYPLVNMGKLLEARINLIVKDDQIKRVREPNNDLLQDDAGNVVLQFGNVVKLMNGIQNIQILYLTADTLEVLSLCCESMPVFNNLKTLGIKSEEGRGWQAVPALLRNCPHLEYLIIEGLLHNVTDKCGDACDCISREDKGRSLASCPVKKVEIQGFRGTMREINMIGHFLRSFKCLKEMGIFPEEEGPTNFENPGAFEYVEKILKLYNEISNCDVYFLVWGYMRRKWTTQ.

The F-box domain occupies 1 to 47; it reads MDRVSNLPDGVRGHILSFLPAKHIALTSVLSKSWLNLWKLIPILDID. LRR repeat units follow at residues 122–150, 175–200, 222–248, 313–344, and 345–370; these read SYED…KIRN, SDLI…RMAS, GTGC…NYSD, ILYL…GIKS, and EEGR…IIEG.

In Arabidopsis thaliana (Mouse-ear cress), this protein is F-box/LRR-repeat protein At3g58930.